The chain runs to 296 residues: tRNA uridine(34) hydroxylase (296 aa).

Residues 130 to 225 (RGDDVVFFDG…YGEAYGNDGY (96 aa)) form the Rhodanese domain. Residue cysteine 185 is the Cysteine persulfide intermediate of the active site.

The protein belongs to the TrhO family.

It carries out the reaction uridine(34) in tRNA + AH2 + O2 = 5-hydroxyuridine(34) in tRNA + A + H2O. Its function is as follows. Catalyzes oxygen-dependent 5-hydroxyuridine (ho5U) modification at position 34 in tRNAs. This Corynebacterium kroppenstedtii (strain DSM 44385 / JCM 11950 / CIP 105744 / CCUG 35717) protein is tRNA uridine(34) hydroxylase.